The chain runs to 729 residues: Fatty acid oxidation complex subunit alpha (729 aa).

The enoyl-CoA hydratase/isomerase stretch occupies residues 1–189; the sequence is MLYKGDTLYL…KIGLVDGVVK (189 aa). Asp-296 contacts substrate. Residues 311-729 are 3-hydroxyacyl-CoA dehydrogenase; that stretch reads ETPKQAAVLG…ARPVGDLKTA (419 aa). NAD(+) contacts are provided by residues Met-324, Asp-343, 400-402, Lys-407, and Ser-429; that span reads VVE. His-450 acts as the For 3-hydroxyacyl-CoA dehydrogenase activity in catalysis. Residue Asn-453 participates in NAD(+) binding. Residues Asn-500 and Tyr-660 each contribute to the substrate site. The segment at 708-729 is disordered; that stretch reads RHNEPYYPPVEPARPVGDLKTA.

It in the N-terminal section; belongs to the enoyl-CoA hydratase/isomerase family. The protein in the C-terminal section; belongs to the 3-hydroxyacyl-CoA dehydrogenase family. Heterotetramer of two alpha chains (FadB) and two beta chains (FadA).

It catalyses the reaction a (3S)-3-hydroxyacyl-CoA + NAD(+) = a 3-oxoacyl-CoA + NADH + H(+). The enzyme catalyses a (3S)-3-hydroxyacyl-CoA = a (2E)-enoyl-CoA + H2O. It carries out the reaction a 4-saturated-(3S)-3-hydroxyacyl-CoA = a (3E)-enoyl-CoA + H2O. The catalysed reaction is (3S)-3-hydroxybutanoyl-CoA = (3R)-3-hydroxybutanoyl-CoA. It catalyses the reaction a (3Z)-enoyl-CoA = a 4-saturated (2E)-enoyl-CoA. The enzyme catalyses a (3E)-enoyl-CoA = a 4-saturated (2E)-enoyl-CoA. Its pathway is lipid metabolism; fatty acid beta-oxidation. Functionally, involved in the aerobic and anaerobic degradation of long-chain fatty acids via beta-oxidation cycle. Catalyzes the formation of 3-oxoacyl-CoA from enoyl-CoA via L-3-hydroxyacyl-CoA. It can also use D-3-hydroxyacyl-CoA and cis-3-enoyl-CoA as substrate. This chain is Fatty acid oxidation complex subunit alpha, found in Escherichia coli O81 (strain ED1a).